The primary structure comprises 25 residues: Caerin-1.5 (25 aa).

L25 is subject to Leucine amide.

Expressed by the skin parotoid and/or rostral glands.

It localises to the secreted. Its function is as follows. Antibacterial peptide, that adopts an alpha helical conformation which can disrupt bacterial membranes. Each caerin displays a different antimicrobial specificity. This Ranoidea caerulea (Green tree frog) protein is Caerin-1.5.